We begin with the raw amino-acid sequence, 534 residues long: Glucose-6-phosphate isomerase (534 aa).

Catalysis depends on Glu356, which acts as the Proton donor. Residues His387 and Lys502 contribute to the active site.

Belongs to the GPI family.

The protein localises to the cytoplasm. The enzyme catalyses alpha-D-glucose 6-phosphate = beta-D-fructose 6-phosphate. The protein operates within carbohydrate biosynthesis; gluconeogenesis. It participates in carbohydrate degradation; glycolysis; D-glyceraldehyde 3-phosphate and glycerone phosphate from D-glucose: step 2/4. Its function is as follows. Catalyzes the reversible isomerization of glucose-6-phosphate to fructose-6-phosphate. The protein is Glucose-6-phosphate isomerase of Desulfotalea psychrophila (strain LSv54 / DSM 12343).